The primary structure comprises 452 residues: Transcription factor AP-2-delta (452 aa).

Serine 239 carries the post-translational modification Phosphoserine; by PKA. Residues 280 to 410 (RRKAANVTLL…VLSEMLNYLE (131 aa)) form an H-S-H (helix-span-helix), dimerization region. Positions 416–452 (KNGGAADSGQGHANSEKAPLRKTSEAAVKEGKTEKTD) are disordered. Positions 429 to 452 (NSEKAPLRKTSEAAVKEGKTEKTD) are enriched in basic and acidic residues.

The protein belongs to the AP-2 family. In terms of assembly, binds DNA as a dimer. Can form homodimers or heterodimers with other AP-2 family members. As to expression, highly expressed in brain, placenta, skeletal muscle, thymus, small intestine, and prostate, and expressed at lower levels in leukocyte, spleen, testis, ovary and colon. Barely detectable in heart, kidney, liver, lung or pancreas.

The protein resides in the nucleus. In terms of biological role, sequence-specific DNA-binding protein that interacts with inducible viral and cellular enhancer elements to regulate transcription of selected genes. AP-2 factors bind to the consensus sequence 5'-GCCNNNGGC-3' and activate genes involved in a large spectrum of important biological functions including proper eye, face, body wall, limb and neural tube development. They also suppress a number of genes including MCAM/MUC18, C/EBP alpha and MYC. The polypeptide is Transcription factor AP-2-delta (Homo sapiens (Human)).